The chain runs to 264 residues: Transcription initiation factor TFIID subunit 9 (264 aa).

Lysine 5 carries the N6-acetyllysine modification. Serine 149, serine 152, serine 155, and serine 158 each carry phosphoserine. The disordered stretch occupies residues 150-174 (VGSVSSRPSTPTLGTPTPQAMSVST). The segment covering 151-174 (GSVSSRPSTPTLGTPTPQAMSVST) has biased composition (polar residues). Residues threonine 159, threonine 161, threonine 164, and threonine 178 each carry the phosphothreonine modification. Residues serine 181 and serine 196 each carry the phosphoserine modification. The interval 233 to 264 (QNTANESANALKRKREEEDDDDDDDDDDYDNL) is disordered. Residues 249–264 (EEDDDDDDDDDDYDNL) show a composition bias toward acidic residues.

The protein belongs to the TAF9 family. Component of the TFIID basal transcription factor complex, composed of TATA-box-binding protein TBP, and a number of TBP-associated factors (TAFs), including TAF1, TAF2, TAF3, TAF4, TAF5, TAF6, TAF7, TAF8, TAF9, TAF10, TAF11, TAF12 and TAF13. Component of the TATA-binding protein-free TAF complex (TFTC), the PCAF histone acetylase complex and the STAGA transcription coactivator-HAT complex. The PCAF complex consists at least of TADA2L/ADA2, SUPT3H/SPT3, TADA3L/ADA3, TAF5L/PAF65-beta, TAF6L/PAF65-alpha, TAF10/TAFII30, TAF12/TAFII20, TAF9/TAFII31 and TRRAP. The STAGA transcription coactivator-HAT complex consists at least of SUPT3H, GCN5L2, SUPT7L, TAF5L, TAF6L, TADA3L, TAD1L, TAF10, TAF12, TRRAP and TAF9. Binds N-terminal domain of p53/TP53 which is essential for transcription. Component of some MLL1/MLL complex, at least composed of the core components KMT2A/MLL1, ASH2L, HCFC1/HCF1, WDR5 and RBBP5, as well as the facultative components BACC1, CHD8, E2F6, HSP70, INO80C, KANSL1, LAS1L, MAX, MCRS1, MGA, MYST1/MOF, PELP1, PHF20, PRP31, RING2, RUVB1/TIP49A, RUVB2/TIP49B, SENP3, TAF1, TAF4, TAF6, TAF7, TAF9 and TEX10. Binds TFIIB and the Herpes simplex virus activator VP16. Forms a heterodimer with TAF6 in a complex with the TAF4B-TAF12 heterodimer. Also interacts with TAF5. Binds directly DNA. Increased DNA binding when complexed with TAF6.

It is found in the nucleus. Its function is as follows. The TFIID basal transcription factor complex plays a major role in the initiation of RNA polymerase II (Pol II)-dependent transcription. TFIID recognizes and binds promoters with or without a TATA box via its subunit TBP, a TATA-box-binding protein, and promotes assembly of the pre-initiation complex (PIC). The TFIID complex consists of TBP and TBP-associated factors (TAFs), including TAF1, TAF2, TAF3, TAF4, TAF5, TAF6, TAF7, TAF8, TAF9, TAF10, TAF11, TAF12 and TAF13. TAF9 is also a component of the TBP-free TAFII complex (TFTC), the PCAF histone acetylase complex and the STAGA transcription coactivator-HAT complex. TAF9 and its paralog TAF9B are involved in transcriptional activation as well as repression of distinct but overlapping sets of genes. Essential for cell viability. May have a role in gene regulation associated with apoptosis. This chain is Transcription initiation factor TFIID subunit 9, found in Rattus norvegicus (Rat).